A 258-amino-acid polypeptide reads, in one-letter code: Undecaprenyl-diphosphatase (258 aa).

A run of 8 helical transmembrane segments spans residues 1–21, 42–62, 69–89, 96–116, 135–155, 173–193, 211–231, and 237–257; these read MDFL…FLPV, LKCF…FMFF, FNLW…GFLA, FFEP…FIVV, VSFK…IPGT, EVAA…ATAY, IFLV…KLFL, and FSYI…LIYI.

This sequence belongs to the UppP family.

Its subcellular location is the cell inner membrane. The catalysed reaction is di-trans,octa-cis-undecaprenyl diphosphate + H2O = di-trans,octa-cis-undecaprenyl phosphate + phosphate + H(+). Its function is as follows. Catalyzes the dephosphorylation of undecaprenyl diphosphate (UPP). Confers resistance to bacitracin. The chain is Undecaprenyl-diphosphatase from Campylobacter fetus subsp. fetus (strain 82-40).